Here is a 600-residue protein sequence, read N- to C-terminus: Na(+)/dicarboxylate cotransporter 3 (600 aa).

Residues 1–16 (MAALAALAKKVWSARR) are Cytoplasmic-facing. Residues 17–37 (LLVLLLVPLALLPILFALPPK) form a helical membrane-spanning segment. The Extracellular segment spans residues 38-55 (EGRCLYVILLMAVYWCTE). A helical transmembrane segment spans residues 56–76 (ALPLSVTALLPIILFPFMGIL). At 77–82 (PSSKVC) the chain is on the cytoplasmic side. A helical membrane pass occupies residues 83–103 (PQYFLDTNFLFLSGLIMASAI). At 104-137 (EERNLHRRIALKVLMLVGVQPARLILGMMVTTSF) the chain is on the extracellular side. Residues 138-158 (LSMWLSNTASTAMMLPIASAI) form a helical membrane-spanning segment. The Cytoplasmic portion of the chain corresponds to 159–229 (LKSLFGQRDT…KEEEHRRNIW (71 aa)). Residues 230 to 250 (KGFLISIPYSASIGGTATLTG) traverse the membrane as a helical segment. The Extracellular segment spans residues 251-278 (TAPNLILLGQLKSFFPQCDVVNFGSWFI). A helical transmembrane segment spans residues 279 to 299 (FAFPLMLLFLLVGWLWISFLY). At 300–336 (GGMSWRGWRKKNSKLQDVAEDKAKAVIQEEFQNLGPI) the chain is on the cytoplasmic side. The chain crosses the membrane as a helical span at residues 337–357 (KFAEQAVFILFCLFAILLFSR). Residues 358–372 (DPKFIPGWASLFAPG) lie on the Extracellular side of the membrane. Residues 373–393 (FVSDAVTGVAIVTILFFFPSQ) form a helical membrane-spanning segment. At 394–422 (KPSLKWWFDFKAPNSETEPLLSWKKAQET) the chain is on the cytoplasmic side. The segment at residues 423-443 (VPWNIILLLGGGFAMAKGCEE) is an intramembrane region (helical). At 444-461 (SGLSAWIGGQLHPLEHVP) the chain is on the cytoplasmic side. Residues 462-482 (PLLAVLLITVVIAFFTEFASN) traverse the membrane as a helical segment. Residues 483 to 505 (TATIIIFLPVLAELAIRLHVHPL) are Extracellular-facing. Residues 506–526 (YLMIPGTVSCSYAFMLPVSTP) form a helical membrane-spanning segment. Residues 527-546 (PNSIAFSTGHLLVKDMVRTG) lie on the Cytoplasmic side of the membrane. The chain crosses the membrane as a helical span at residues 547–567 (LLMNLMGVLLLSLAMNTWAQA). Over 568-600 (IFQLGTFPDWANTHAANVTALPPALTNNTVQTL) the chain is Extracellular. N-linked (GlcNAc...) asparagine glycosylation is found at asparagine 584 and asparagine 594.

The protein belongs to the SLC13A/DASS transporter (TC 2.A.47) family. NADC subfamily. Highly expressed in proximal parts of straight tubules in the kidney. Detected in placenta, in brain, and in liver. Strongly expressed within the meningeal layers of supporting tissue that surround the brain and relatively weakly expressed throughout the cerebral cortex, hippocampus, and cerebellum.

It is found in the cell membrane. The enzyme catalyses succinate(out) + 3 Na(+)(out) = succinate(in) + 3 Na(+)(in). The catalysed reaction is 2-oxoglutarate(out) + 3 Na(+)(out) = 2-oxoglutarate(in) + 3 Na(+)(in). It catalyses the reaction N-acetyl-L-aspartate(out) + 3 Na(+)(out) = N-acetyl-L-aspartate(in) + 3 Na(+)(in). It carries out the reaction glutarate(out) + 3 Na(+)(out) = glutarate(in) + 3 Na(+)(in). The enzyme catalyses fumarate(out) + 3 Na(+)(out) = fumarate(in) + 3 Na(+)(in). The catalysed reaction is malate(out) + 3 Na(+)(out) = malate(in) + 3 Na(+)(in). It catalyses the reaction 2,2-dimethylsuccinate(out) + 3 Na(+)(out) = 2,2-dimethylsuccinate(in) + 3 Na(+)(in). It carries out the reaction 2,3-dimethylsuccinate(out) + 3 Na(+)(out) = 2,3-dimethylsuccinate(in) + 3 Na(+)(in). The enzyme catalyses itaconate(out) + 3 Na(+)(out) = itaconate(in) + 3 Na(+)(in). With respect to regulation, li(+) decreases succinate transport in the presence of Na(+). Its function is as follows. High-affinity sodium-dicarboxylate cotransporter that accepts a range of substrates with 4-6 carbon atoms, such as the citric acid cycle intermediates succinate and alpha-ketoglutarate (2-oxoglutarate), as well as other compounds including N-acetyl-L-aspartate. Transports the dicarboxylate into the cell with a probable stoichiometry of 3 Na(+) for 1 divalent dicarboxylate, rendering the process electrogenic. Can transport citrate in a Na(+)-dependent manner, recognizing the divalent form of citrate rather than the trivalent form which is normally found in blood. Imports itaconate in hepatocytes leading to activation of TFEB-dependent lysosomal biogenesis involved in antibacterial innate immune response. The sequence is that of Na(+)/dicarboxylate cotransporter 3 (Slc13a3) from Rattus norvegicus (Rat).